Here is a 376-residue protein sequence, read N- to C-terminus: Bifunctional enzyme IspD/IspF (376 aa).

The segment at 1–220 (MRIAAILVAG…RSMSISMIPR (220 aa)) is 2-C-methyl-D-erythritol 4-phosphate cytidylyltransferase. The tract at residues 220–376 (RIGTGYDVHA…QAAVIIMIPA (157 aa)) is 2-C-methyl-D-erythritol 2,4-cyclodiphosphate synthase. A divalent metal cation contacts are provided by Asp226 and His228. 4-CDP-2-C-methyl-D-erythritol 2-phosphate contacts are provided by residues 226-228 (DVH) and 252-253 (HS). His260 is an a divalent metal cation binding site. Residues 274-276 (DIG), 350-353 (TTSE), Phe357, and Arg360 contribute to the 4-CDP-2-C-methyl-D-erythritol 2-phosphate site.

It in the N-terminal section; belongs to the IspD/TarI cytidylyltransferase family. IspD subfamily. The protein in the C-terminal section; belongs to the IspF family. It depends on a divalent metal cation as a cofactor.

The catalysed reaction is 2-C-methyl-D-erythritol 4-phosphate + CTP + H(+) = 4-CDP-2-C-methyl-D-erythritol + diphosphate. The enzyme catalyses 4-CDP-2-C-methyl-D-erythritol 2-phosphate = 2-C-methyl-D-erythritol 2,4-cyclic diphosphate + CMP. The protein operates within isoprenoid biosynthesis; isopentenyl diphosphate biosynthesis via DXP pathway; isopentenyl diphosphate from 1-deoxy-D-xylulose 5-phosphate: step 2/6. It functions in the pathway isoprenoid biosynthesis; isopentenyl diphosphate biosynthesis via DXP pathway; isopentenyl diphosphate from 1-deoxy-D-xylulose 5-phosphate: step 4/6. Functionally, bifunctional enzyme that catalyzes the formation of 4-diphosphocytidyl-2-C-methyl-D-erythritol from CTP and 2-C-methyl-D-erythritol 4-phosphate (MEP) (IspD), and catalyzes the conversion of 4-diphosphocytidyl-2-C-methyl-D-erythritol 2-phosphate (CDP-ME2P) to 2-C-methyl-D-erythritol 2,4-cyclodiphosphate (ME-CPP) with a corresponding release of cytidine 5-monophosphate (CMP) (IspF). In Granulibacter bethesdensis (strain ATCC BAA-1260 / CGDNIH1), this protein is Bifunctional enzyme IspD/IspF.